Reading from the N-terminus, the 200-residue chain is Recombination protein RecR (200 aa).

A C4-type zinc finger spans residues Cys57–Cys72. One can recognise a Toprim domain in the interval Ser80–Pro175.

The protein belongs to the RecR family.

Its function is as follows. May play a role in DNA repair. It seems to be involved in an RecBC-independent recombinational process of DNA repair. It may act with RecF and RecO. This chain is Recombination protein RecR, found in Alcanivorax borkumensis (strain ATCC 700651 / DSM 11573 / NCIMB 13689 / SK2).